A 453-amino-acid chain; its full sequence is F-box protein SKIP14 (453 aa).

Positions 34 to 104 (RKNTGGDASS…NRQQLFAGLS (71 aa)) constitute an F-box; degenerate domain.

As to quaternary structure, part of a SCF (ASK-cullin-F-box) protein ligase complex. Interacts with CUL1, SKP1A/ASK1 and SPK1B/ASK2.

It functions in the pathway protein modification; protein ubiquitination. In terms of biological role, component of SCF(ASK-cullin-F-box) E3 ubiquitin ligase complexes, which may mediate the ubiquitination and subsequent proteasomal degradation of target proteins. In Arabidopsis thaliana (Mouse-ear cress), this protein is F-box protein SKIP14 (SKIP14).